The primary structure comprises 404 residues: DNA replication and repair protein RecF (404 aa).

30-37 (GSNGQGKT) provides a ligand contact to ATP.

Belongs to the RecF family.

It localises to the cytoplasm. Its function is as follows. The RecF protein is involved in DNA metabolism; it is required for DNA replication and normal SOS inducibility. RecF binds preferentially to single-stranded, linear DNA. It also seems to bind ATP. The sequence is that of DNA replication and repair protein RecF from Clavibacter michiganensis subsp. michiganensis (strain NCPPB 382).